A 242-amino-acid chain; its full sequence is NAD-dependent protein deacetylase 1 (242 aa).

Residues 1–242 (MTITSWLAAS…LNEQLAEVDP (242 aa)) enclose the Deacetylase sirtuin-type domain. Residues A19, T23, F30, R31, Q97, V99, D100, and H115 each coordinate NAD(+). Nicotinamide is bound at residue F30. Nicotinamide contacts are provided by V99 and D100. H115 acts as the Proton acceptor in catalysis. Residues C123, C126, C142, and C144 each coordinate Zn(2+). The NAD(+) site is built by S182, S183, N207, and I226.

This sequence belongs to the sirtuin family. Class U subfamily. The cofactor is Zn(2+).

Its subcellular location is the cytoplasm. The enzyme catalyses N(6)-acetyl-L-lysyl-[protein] + NAD(+) + H2O = 2''-O-acetyl-ADP-D-ribose + nicotinamide + L-lysyl-[protein]. Its function is as follows. NAD-dependent protein deacetylase which modulates the activities of several enzymes which are inactive in their acetylated form. In Geobacillus kaustophilus (strain HTA426), this protein is NAD-dependent protein deacetylase 1.